Reading from the N-terminus, the 132-residue chain is Large ribosomal subunit protein uL14 (132 aa).

This sequence belongs to the universal ribosomal protein uL14 family. In terms of assembly, part of the 50S ribosomal subunit. Forms a cluster with proteins L3 and L24e, part of which may contact the 16S rRNA in 2 intersubunit bridges.

Its function is as follows. Binds to 23S rRNA. Forms part of two intersubunit bridges in the 70S ribosome. The protein is Large ribosomal subunit protein uL14 of Methanococcus vannielii.